Consider the following 291-residue polypeptide: Protease HtpX (291 aa).

2 consecutive transmembrane segments (helical) span residues 4 to 24 and 36 to 56; these read IALFLATNLAVMIVFSIVLNI and LSGLLVMAVLFGFGGSLISLM. Residue histidine 143 coordinates Zn(2+). Glutamate 144 is a catalytic residue. Zn(2+) is bound at residue histidine 147. The next 2 membrane-spanning stretches (helical) occupy residues 151-171 and 199-219; these read GDMITMTLMQGVVNTFVIFLS and FIVSTILELAFGFLASFLTMW. Residue glutamate 225 coordinates Zn(2+).

This sequence belongs to the peptidase M48B family. Requires Zn(2+) as cofactor.

It localises to the cell inner membrane. This chain is Protease HtpX, found in Aliivibrio fischeri (strain MJ11) (Vibrio fischeri).